Consider the following 154-residue polypeptide: Myoglobin (154 aa).

One can recognise a Globin domain in the interval 2–148; that stretch reads GLSDGEWELV…FRNDIAAKYK (147 aa). Residue serine 4 is modified to Phosphoserine. A Phosphothreonine modification is found at threonine 68. Residue histidine 94 participates in heme b binding.

The protein belongs to the globin family. Monomeric.

Its subcellular location is the cytoplasm. The protein resides in the sarcoplasm. The catalysed reaction is Fe(III)-heme b-[protein] + nitric oxide + H2O = Fe(II)-heme b-[protein] + nitrite + 2 H(+). The enzyme catalyses H2O2 + AH2 = A + 2 H2O. Functionally, monomeric heme protein which primary function is to store oxygen and facilitate its diffusion within muscle tissues. Reversibly binds oxygen through a pentacoordinated heme iron and enables its timely and efficient release as needed during periods of heightened demand. Depending on the oxidative conditions of tissues and cells, and in addition to its ability to bind oxygen, it also has a nitrite reductase activity whereby it regulates the production of bioactive nitric oxide. Under stress conditions, like hypoxia and anoxia, it also protects cells against reactive oxygen species thanks to its pseudoperoxidase activity. The polypeptide is Myoglobin (MB) (Loxodonta africana (African elephant)).